Reading from the N-terminus, the 147-residue chain is DNA-entry nuclease (147 aa).

The helical transmembrane segment at 8-24 threads the bilayer; the sequence is TILLVIVIIAAAAVGLI. A disordered region spans residues 75-100; it reads RDGAEERREQSLKDVPSKKGYDRDEW.

This sequence to B.subtilis NucB. This protein is a subunit of a 75 kDa protein complex, which governs binding and entry of donor DNA. The complex is a tetramer of two subunits of the DNA-entry nuclease and two subunits of a competence-specific protein. Only the complex is able to bind ds- and ss-DNA. Requires Mn(2+) as cofactor.

The protein resides in the cell membrane. The activity can be inhibited by the 18 kDa competence-specific protein nin. Its function is as follows. By degrading DNA that enters the cell, plays a role in the competence of cells to be transformed. Degrades both double-stranded, linear and covalently closed circular DNA. In Bacillus subtilis (strain 168), this protein is DNA-entry nuclease (nucA).